The chain runs to 439 residues: IAA-amino acid hydrolase ILR1-like 2 (439 aa).

The signal sequence occupies residues 1-21; it reads MALNKLLSLTFQLLLFLLSVS. 5 residues coordinate Mn(2+): cysteine 137, histidine 139, glutamate 173, histidine 197, and histidine 397. The Prevents secretion from ER signature appears at 436 to 439; that stretch reads HEEL.

The protein belongs to the peptidase M20 family. In terms of assembly, monomer. Mn(2+) serves as cofactor. As to expression, expressed in leaves, stems, siliques, seeds and flowers. Detected in the distal tips of cotyledons and seedling leaves, hydathodes of leaves from mature plants, pollen, ovules and developing seeds.

Its subcellular location is the endoplasmic reticulum lumen. Its function is as follows. Hydrolyzes certain amino acid conjugates of the plant growth regulator indole-3-acetic acid (IAA), including IAA-Ala, IAA-Leu, IAA-Met, IAA-Phe, IAA-Ser, IAA-Thr, IAA-Tyr and IAA-Val. Is the most efficient enzyme of the ILL family for IAA-Ala. Not important for IAA-Leu hydrolysis in roots. May act with ILR1 to provide free IAA to germinating seedlings. The chain is IAA-amino acid hydrolase ILR1-like 2 from Arabidopsis thaliana (Mouse-ear cress).